Here is a 217-residue protein sequence, read N- to C-terminus: tRNA (guanine-N(7)-)-methyltransferase (217 aa).

E46, E71, D98, and D120 together coordinate S-adenosyl-L-methionine. D120 is a catalytic residue. K124 contributes to the substrate binding site. Residues 126–131 (RHEKRR) are interaction with RNA. Substrate-binding positions include D156 and 196–199 (TEYE).

Belongs to the class I-like SAM-binding methyltransferase superfamily. TrmB family.

It carries out the reaction guanosine(46) in tRNA + S-adenosyl-L-methionine = N(7)-methylguanosine(46) in tRNA + S-adenosyl-L-homocysteine. The protein operates within tRNA modification; N(7)-methylguanine-tRNA biosynthesis. In terms of biological role, catalyzes the formation of N(7)-methylguanine at position 46 (m7G46) in tRNA. This chain is tRNA (guanine-N(7)-)-methyltransferase, found in Lactobacillus gasseri (strain ATCC 33323 / DSM 20243 / BCRC 14619 / CIP 102991 / JCM 1131 / KCTC 3163 / NCIMB 11718 / NCTC 13722 / AM63).